The chain runs to 178 residues: Ribosome maturation factor RimM (178 aa).

The 80-residue stretch at 99–178 (EGDFYWHDLI…TIEVDWDAGF (80 aa)) folds into the PRC barrel domain.

It belongs to the RimM family. In terms of assembly, binds ribosomal protein uS19.

Its subcellular location is the cytoplasm. Functionally, an accessory protein needed during the final step in the assembly of 30S ribosomal subunit, possibly for assembly of the head region. Essential for efficient processing of 16S rRNA. May be needed both before and after RbfA during the maturation of 16S rRNA. It has affinity for free ribosomal 30S subunits but not for 70S ribosomes. The chain is Ribosome maturation factor RimM from Mannheimia succiniciproducens (strain KCTC 0769BP / MBEL55E).